Consider the following 511-residue polypeptide: 2,3-bisphosphoglycerate-independent phosphoglycerate mutase (511 aa).

A Mn(2+)-binding site is contributed by Asp-12. Position 36 is a phosphotyrosine (Tyr-36). Ser-62 provides a ligand contact to Mn(2+). Ser-62 acts as the Phosphoserine intermediate in catalysis. Residues His-123, 153-154, Arg-185, Arg-191, 261-264, and Lys-336 contribute to the substrate site; these read RD and RPDR. Mn(2+)-binding residues include Asp-403, His-407, Asp-444, His-445, and His-462.

It belongs to the BPG-independent phosphoglycerate mutase family. As to quaternary structure, monomer. It depends on Mn(2+) as a cofactor.

It catalyses the reaction (2R)-2-phosphoglycerate = (2R)-3-phosphoglycerate. It functions in the pathway carbohydrate degradation; glycolysis; pyruvate from D-glyceraldehyde 3-phosphate: step 3/5. Its function is as follows. Essential for rapid growth and for sporulation. Catalyzes the interconversion of 2-phosphoglycerate and 3-phosphoglycerate. This chain is 2,3-bisphosphoglycerate-independent phosphoglycerate mutase, found in Bacillus pumilus (strain SAFR-032).